The sequence spans 1075 residues: Carbamoyl phosphate synthase large chain (1075 aa).

The interval 2–403 is carboxyphosphate synthetic domain; it reads PKRTDIKSIL…SLQKALRGLE (402 aa). ATP contacts are provided by arginine 129, arginine 169, glycine 175, glycine 176, glutamate 208, leucine 210, glutamate 215, glycine 241, isoleucine 242, histidine 243, glutamine 285, and glutamate 299. In terms of domain architecture, ATP-grasp 1 spans 133–328; the sequence is DIAMKKIGLD…IAKVAAKLAV (196 aa). Mg(2+)-binding residues include glutamine 285, glutamate 299, and asparagine 301. Mn(2+)-binding residues include glutamine 285, glutamate 299, and asparagine 301. The oligomerization domain stretch occupies residues 404–553; sequence VGATGFDPKV…YSTYEDECEA (150 aa). A carbamoyl phosphate synthetic domain region spans residues 554–936; it reads NPSIDRDKIM…AFAKAQLGSN (383 aa). Residues 679-870 enclose the ATP-grasp 2 domain; that stretch reads QHAVDRLKLK…LAKVAARVMA (192 aa). ATP-binding residues include arginine 715, arginine 754, leucine 756, glutamate 761, glycine 786, valine 787, histidine 788, serine 789, glutamine 829, and glutamate 841. 3 residues coordinate Mg(2+): glutamine 829, glutamate 841, and asparagine 843. The Mn(2+) site is built by glutamine 829, glutamate 841, and asparagine 843. In terms of domain architecture, MGS-like spans 937–1075; it reads STMKKQGRAL…QEMHAQIKKS (139 aa). The tract at residues 937–1075 is allosteric domain; that stretch reads STMKKQGRAL…QEMHAQIKKS (139 aa).

It belongs to the CarB family. In terms of assembly, composed of two chains; the small (or glutamine) chain promotes the hydrolysis of glutamine to ammonia, which is used by the large (or ammonia) chain to synthesize carbamoyl phosphate. Tetramer of heterodimers (alpha,beta)4. It depends on Mg(2+) as a cofactor. Mn(2+) is required as a cofactor.

The catalysed reaction is hydrogencarbonate + L-glutamine + 2 ATP + H2O = carbamoyl phosphate + L-glutamate + 2 ADP + phosphate + 2 H(+). It catalyses the reaction hydrogencarbonate + NH4(+) + 2 ATP = carbamoyl phosphate + 2 ADP + phosphate + 2 H(+). It functions in the pathway amino-acid biosynthesis; L-arginine biosynthesis; carbamoyl phosphate from bicarbonate: step 1/1. Its pathway is pyrimidine metabolism; UMP biosynthesis via de novo pathway; (S)-dihydroorotate from bicarbonate: step 1/3. Its function is as follows. Large subunit of the glutamine-dependent carbamoyl phosphate synthetase (CPSase). CPSase catalyzes the formation of carbamoyl phosphate from the ammonia moiety of glutamine, carbonate, and phosphate donated by ATP, constituting the first step of 2 biosynthetic pathways, one leading to arginine and/or urea and the other to pyrimidine nucleotides. The large subunit (synthetase) binds the substrates ammonia (free or transferred from glutamine from the small subunit), hydrogencarbonate and ATP and carries out an ATP-coupled ligase reaction, activating hydrogencarbonate by forming carboxy phosphate which reacts with ammonia to form carbamoyl phosphate. The polypeptide is Carbamoyl phosphate synthase large chain (Salmonella typhimurium (strain LT2 / SGSC1412 / ATCC 700720)).